We begin with the raw amino-acid sequence, 158 residues long: Glutathione peroxidase-like peroxiredoxin gpx1 (158 aa).

Residue cysteine 36 is the Cysteine sulfenic acid (-SOH) intermediate of the active site. The cysteines at positions 36 and 82 are disulfide-linked.

It belongs to the glutathione peroxidase family. In terms of assembly, monomer.

It is found in the cytoplasm. Its subcellular location is the mitochondrion. The enzyme catalyses a hydroperoxide + [thioredoxin]-dithiol = an alcohol + [thioredoxin]-disulfide + H2O. Its function is as follows. Glutathione peroxidase-like protein that protects cells during oxidative stress. Has peroxidase activity reducing hydrogen peroxide, alkyl and phospholipid hydroperoxides using preferentially thioredoxin as a reducing power. May act as a scavenger of H(2)O(2). This chain is Glutathione peroxidase-like peroxiredoxin gpx1, found in Schizosaccharomyces pombe (strain 972 / ATCC 24843) (Fission yeast).